A 225-amino-acid polypeptide reads, in one-letter code: Orotate phosphoribosyltransferase (225 aa).

Residues lysine 26, 73–74 (YK), arginine 100, lysine 101, lysine 104, histidine 106, and 127–135 (EDVTTAGTS) each bind 5-phospho-alpha-D-ribose 1-diphosphate. Residues threonine 131 and arginine 160 each coordinate orotate.

The protein belongs to the purine/pyrimidine phosphoribosyltransferase family. PyrE subfamily. In terms of assembly, homodimer. Mg(2+) is required as a cofactor.

It catalyses the reaction orotidine 5'-phosphate + diphosphate = orotate + 5-phospho-alpha-D-ribose 1-diphosphate. The protein operates within pyrimidine metabolism; UMP biosynthesis via de novo pathway; UMP from orotate: step 1/2. Its function is as follows. Catalyzes the transfer of a ribosyl phosphate group from 5-phosphoribose 1-diphosphate to orotate, leading to the formation of orotidine monophosphate (OMP). The chain is Orotate phosphoribosyltransferase from Lachnoclostridium phytofermentans (strain ATCC 700394 / DSM 18823 / ISDg) (Clostridium phytofermentans).